Reading from the N-terminus, the 778-residue chain is Phenylalanine--tRNA ligase beta subunit (778 aa).

The tRNA-binding domain occupies 39-150; that stretch reads YEVPQKIVFG…GKYKIGEEVS (112 aa). Residues 391 to 467 enclose the B5 domain; sequence HEDKIISLNK…RLVGIDNIPS (77 aa). 4 residues coordinate Mg(2+): Asp445, Asp451, Glu454, and Glu455. An FDX-ACB domain is found at 686 to 778; that stretch reads SKYQASFRDL…LKNQLGVGIR (93 aa).

The protein belongs to the phenylalanyl-tRNA synthetase beta subunit family. Type 1 subfamily. In terms of assembly, tetramer of two alpha and two beta subunits. It depends on Mg(2+) as a cofactor.

The protein localises to the cytoplasm. The catalysed reaction is tRNA(Phe) + L-phenylalanine + ATP = L-phenylalanyl-tRNA(Phe) + AMP + diphosphate + H(+). The polypeptide is Phenylalanine--tRNA ligase beta subunit (Sulfurimonas denitrificans (strain ATCC 33889 / DSM 1251) (Thiomicrospira denitrificans (strain ATCC 33889 / DSM 1251))).